The following is a 937-amino-acid chain: MTDYKATLNLPQTGFPMKAGLSQREPARLKEWQQKQLYQKIREAFAGRPKFILHDGPPYANGDIHIGHAVNKILKDMIVKSRTLAGFDAPYVPGWDCHGLPIELMVEKKVGKAGHKVDAGTFRKKCREYASKQVAGQKSDFMRLGVLGDWDNPYLTMDFTFEANIIRSLGKIVDNGHLQQGFKPVHWCLDCGSALAEAEVEYEDKISPAIDVAFPVVDVADFVARSGIEASAPALVIWTTTPWTLPANRAVAVHPELDYVLLSGELSGVARELLVAEALADDLVTRWGLENVTRSAAVAGSKLEMLALQHPFLEAQVPVVFGEHVTTDAGTGLVHTAPGHGVDDFMVGKQYDLDPISPVLDNGLFREDLPVVGGLHVSKANEPVIEALKDSGNLVKLAKIEHSYPHCWRHKTPLIFRATAQWFVSMDQAGLLPRARQEIDKVQWLPEWGKARIEGMLTDRPDWCISRQRTWGVPIALFVNKETSELHPQTPALIEQVAQRVEKAGVDAWFDLDPAELLGDEADQYSKVTDTLDVWFDSGVTHYCVLDQREQLRAPADLYLEGSDQHRGWFQSSLLTSLAIRDAAPYSTVLTHGFTVDEHGRKMSKSVGNVIAPQEVWNDLGADILRLWVCATDYRGEMSVSKDILKQMGDSYRRIRNTSRFLLSNLSGFEPATDALQPEQMLALDRYIVDRALQVQAEIQDLYDGYHFHQVYQKLHNFCALDLGGFYLDIIKDRQYTTQADSVARRSCQTALYHIAQALVRWMAPVLSFTAEEIYENLPGERLDSVFLAEWYDGLFALADNADMGRAFWDKVQDAKQAVNKAIEGARAAKLIKGSLSAEVVLFVDAEQNALLQRLGDELRFVTITSAAVLKPLAEAPAELEDTSVAGLKVQVLASDHAKCARCWHHQPDVGSHAEHPELCGRCITNVEGDGEVRHYA.

Residues 58–68 carry the 'HIGH' region motif; it reads PYANGDIHIGH. Glutamate 561 serves as a coordination point for L-isoleucyl-5'-AMP. The 'KMSKS' region signature appears at 602 to 606; it reads KMSKS. Lysine 605 is a binding site for ATP. Positions 900, 903, 920, and 923 each coordinate Zn(2+).

The protein belongs to the class-I aminoacyl-tRNA synthetase family. IleS type 1 subfamily. As to quaternary structure, monomer. Requires Zn(2+) as cofactor.

It is found in the cytoplasm. The catalysed reaction is tRNA(Ile) + L-isoleucine + ATP = L-isoleucyl-tRNA(Ile) + AMP + diphosphate. Catalyzes the attachment of isoleucine to tRNA(Ile). As IleRS can inadvertently accommodate and process structurally similar amino acids such as valine, to avoid such errors it has two additional distinct tRNA(Ile)-dependent editing activities. One activity is designated as 'pretransfer' editing and involves the hydrolysis of activated Val-AMP. The other activity is designated 'posttransfer' editing and involves deacylation of mischarged Val-tRNA(Ile). In Alcanivorax borkumensis (strain ATCC 700651 / DSM 11573 / NCIMB 13689 / SK2), this protein is Isoleucine--tRNA ligase.